The chain runs to 1805 residues: Kinesin-like protein KIF13A (1805 aa).

One can recognise a Kinesin motor domain in the interval 5 to 352; it reads KVKVAVRVRP…LRYADRAKRI (348 aa). 102-109 contributes to the ATP binding site; the sequence is GQTGSGKS. A coiled-coil region spans residues 359-436; that stretch reads NEDPNAKVIR…QLESMGISLE (78 aa). One can recognise an FHA domain in the interval 469–519; that stretch reads HTRVGADTSQDIQLFGIGIQPQHCEIDIASDGDVTLTPKENARSCVNGTLV. The segment covering 556–567 has biased composition (basic and acidic residues); that stretch reads EKETGPPEHDLD. Disordered regions lie at residues 556 to 575 and 633 to 656; these read EKET…ASSE and QQLS…SQTA. 2 coiled-coil regions span residues 602–775 and 1100–1138; these read VQVL…LYGK and DALI…EQWV. Ser-636 bears the Phosphoserine mark. Position 1287 is a phosphoserine (Ser-1287). Residues 1385–1396 show a composition bias toward polar residues; sequence TPNVHNVSSSRP. The tract at residues 1385 to 1404 is disordered; the sequence is TPNVHNVSSSRPDLSGFDED. Phosphoserine occurs at positions 1454, 1481, 1490, and 1494. Residues 1507 to 1531 are disordered; it reads PSGSNGSSMPVEHNSKREKKIDSEE. Residues 1518-1547 are a coiled coil; the sequence is EHNSKREKKIDSEEEENELEAINRKLISSQ. The span at 1519–1528 shows a compositional bias: basic and acidic residues; sequence HNSKREKKID. A phosphoserine mark is found at Ser-1529 and Ser-1572. A compositionally biased stretch (low complexity) spans 1612–1621; sequence MVVPSSDSSD. The segment at 1612 to 1645 is disordered; sequence MVVPSSDSSDQLAIQTKDADSTEHSTPSLVHDFR. Ser-1648 and Ser-1698 each carry phosphoserine. The interval 1749 to 1779 is disordered; that stretch reads GLTDSSAGELSSRRSLPNKTGGKTVSDGLHH. Over residues 1751-1771 the composition is skewed to polar residues; that stretch reads TDSSAGELSSRRSLPNKTGGK.

The protein belongs to the TRAFAC class myosin-kinesin ATPase superfamily. Kinesin family. Interacts with AP2B1. Interacts with ZFYVE26. Interacts with AP1G1 and AP1G2. As to expression, widely expressed, with highest levels in heart, brain and skeletal muscle.

The protein resides in the cytoplasm. It localises to the cytoskeleton. Its subcellular location is the microtubule organizing center. The protein localises to the centrosome. It is found in the midbody. The protein resides in the endosome membrane. It localises to the golgi apparatus membrane. Its function is as follows. Plus end-directed microtubule-dependent motor protein involved in intracellular transport and regulating various processes such as mannose-6-phosphate receptor (M6PR) transport to the plasma membrane, endosomal sorting during melanosome biogenesis and cytokinesis. Mediates the transport of M6PR-containing vesicles from trans-Golgi network to the plasma membrane via direct interaction with the AP-1 complex. During melanosome maturation, required for delivering melanogenic enzymes from recycling endosomes to nascent melanosomes by creating peripheral recycling endosomal subdomains in melanocytes. Also required for the abscission step in cytokinesis: mediates translocation of ZFYVE26, and possibly TTC19, to the midbody during cytokinesis. The protein is Kinesin-like protein KIF13A (KIF13A) of Homo sapiens (Human).